The chain runs to 145 residues: D-aminoacyl-tRNA deacylase (145 aa).

A Gly-cisPro motif, important for rejection of L-amino acids motif is present at residues glycine 137–proline 138.

Belongs to the DTD family. Homodimer.

The protein resides in the cytoplasm. It catalyses the reaction glycyl-tRNA(Ala) + H2O = tRNA(Ala) + glycine + H(+). It carries out the reaction a D-aminoacyl-tRNA + H2O = a tRNA + a D-alpha-amino acid + H(+). An aminoacyl-tRNA editing enzyme that deacylates mischarged D-aminoacyl-tRNAs. Also deacylates mischarged glycyl-tRNA(Ala), protecting cells against glycine mischarging by AlaRS. Acts via tRNA-based rather than protein-based catalysis; rejects L-amino acids rather than detecting D-amino acids in the active site. By recycling D-aminoacyl-tRNA to D-amino acids and free tRNA molecules, this enzyme counteracts the toxicity associated with the formation of D-aminoacyl-tRNA entities in vivo and helps enforce protein L-homochirality. The protein is D-aminoacyl-tRNA deacylase of Klebsiella pneumoniae (strain 342).